Reading from the N-terminus, the 115-residue chain is Thioredoxin-1 (115 aa).

The Thioredoxin domain maps to 2–114 (LKRCNFKNQV…RQKVLEHVSA (113 aa)). Active-site nucleophile residues include Cys-39 and Cys-42. Cysteines 39 and 42 form a disulfide.

The protein belongs to the thioredoxin family. Expressed in ASJ and ASI ciliated sensory neurons. Expressed in the intestine (at protein level).

Functionally, participates in various redox reactions through the reversible oxidation of its active center dithiol to a disulfide and catalyzes dithiol-disulfide exchange reactions. Shown to facilitate the reduction of insulin disulfide bonds. Might play a role in the reversible nitrosylation of cysteine residues in target proteins, and thereby contributing to the response to intracellular nitric oxide. Shapes the ASJ sensory neuron biphasic response to nitric oxide (NO) exposure; trans-nitrosylation activity might inhibit calcium flux to the cytoplasm in ASJ neurons when exposed to a NO stimulus, whereas de-nitrosylation activity might promote calcium flux when NO is diminished. By regulating the NO-induced ASJ sensory neuron activity, mediates the avoidance response to NO-producing organisms like P.aeruginosa. Positively regulates life span extension under normal and caloric restriction conditions, dauer formation and the oxidative stress response. Contributes to the down-regulation of expression of the insulin-like neuropeptide daf-28 in the ASJ neurons in a redox-independent fashion, thereby promoting dauer formation. Negatively regulates the nuclear localization of the intestinal skn-1 transcription factor in a p38 MAPK pathway-dependent and redox-independent fashion. The protein is Thioredoxin-1 (trx-1) of Caenorhabditis elegans.